The sequence spans 153 residues: uncharacterized protein (153 aa).

The disordered stretch occupies residues 17 to 78 (IYIHTPHPHP…HTTLSNLSLN (62 aa)). A compositionally biased stretch (basic residues) spans 22 to 38 (PHPHPHPHPHTPTHTHP).

This is an uncharacterized protein from Saccharomyces cerevisiae (strain ATCC 204508 / S288c) (Baker's yeast).